The primary structure comprises 68 residues: Serine rich endogenous peptide 22 (68 aa).

The signal sequence occupies residues 1–25 (MNKALVWLITLLFLIFSATPNRVLA). The SCOOP motif motif lies at 50-64 (KIGVGASNSGHSPGA). A SxS motif essential for MIK2 binding motif is present at residues 56–58 (SNS).

Belongs to the serine rich endogenous peptide (SCOOP) phytocytokine family. In terms of assembly, interacts with MIK2 (via extracellular leucine-rich repeat domain); this interaction triggers the formation of complex between MIK2 and the BAK1/SERK3 and SERK4 coreceptors, and subsequent BAK1 activation by phosphorylation.

The protein localises to the cell membrane. It localises to the secreted. The protein resides in the extracellular space. Its subcellular location is the apoplast. Functionally, brassicaceae-specific phytocytokine (plant endogenous peptide released into the apoplast) perceived by MIK2 in a BAK1/SERK3 and SERK4 coreceptors-dependent manner, that modulates various physiological and antimicrobial processes including growth prevention and reactive oxygen species (ROS) response regulation. The sequence is that of Serine rich endogenous peptide 22 from Arabidopsis thaliana (Mouse-ear cress).